A 226-amino-acid chain; its full sequence is Ornithine decarboxylase antizyme (226 aa).

This sequence belongs to the ODC antizyme family. As to quaternary structure, interacts with ODC and thereby sterically blocks ODC homodimerization.

Its function is as follows. Ornithine decarboxylase (ODC) antizyme protein that negatively regulates ODC activity and intracellular polyamine biosynthesis in response to increased intracellular polyamine levels. Binds to ODC monomers, inhibiting the assembly of the functional ODC homodimer, and targets the monomers for ubiquitin-independent proteolytic destruction by the 26S proteasome. The protein is Ornithine decarboxylase antizyme (spa1) of Schizosaccharomyces pombe (strain 972 / ATCC 24843) (Fission yeast).